The following is a 265-amino-acid chain: Tryptophan 2,3-dioxygenase (265 aa).

Residues phenylalanine 38 to histidine 42 and arginine 104 contribute to the substrate site. Histidine 223 contributes to the heme binding site. Threonine 237 contributes to the substrate binding site.

It belongs to the tryptophan 2,3-dioxygenase family. Homotetramer. The cofactor is heme.

The enzyme catalyses L-tryptophan + O2 = N-formyl-L-kynurenine. Its pathway is amino-acid degradation; L-tryptophan degradation via kynurenine pathway; L-kynurenine from L-tryptophan: step 1/2. Functionally, heme-dependent dioxygenase that catalyzes the oxidative cleavage of the L-tryptophan (L-Trp) pyrrole ring and converts L-tryptophan to N-formyl-L-kynurenine. Catalyzes the oxidative cleavage of the indole moiety. This is Tryptophan 2,3-dioxygenase from Anaeromyxobacter dehalogenans (strain 2CP-C).